The sequence spans 735 residues: Catalase-peroxidase (735 aa).

Polar residues predominate over residues 1–26 (MENQNRQNASQCPFHGSITNQSSNRT). The interval 1-29 (MENQNRQNASQCPFHGSITNQSSNRTTNK) is disordered. Positions 100 to 223 (WHSAGTYRIG…LAASVMGLIY (124 aa)) form a cross-link, tryptophyl-tyrosyl-methioninium (Trp-Tyr) (with M-249). The Proton acceptor role is filled by H101. The segment at residues 223 to 249 (YVNPEGPDGKPDPKAAARDIRETFRRM) is a cross-link (tryptophyl-tyrosyl-methioninium (Tyr-Met) (with W-100)). Heme b is bound at residue H264.

It belongs to the peroxidase family. Peroxidase/catalase subfamily. As to quaternary structure, homodimer or homotetramer. Requires heme b as cofactor. Formation of the three residue Trp-Tyr-Met cross-link is important for the catalase, but not the peroxidase activity of the enzyme.

It carries out the reaction H2O2 + AH2 = A + 2 H2O. It catalyses the reaction 2 H2O2 = O2 + 2 H2O. Bifunctional enzyme with both catalase and broad-spectrum peroxidase activity. This Geobacillus thermodenitrificans (strain NG80-2) protein is Catalase-peroxidase.